The following is a 63-amino-acid chain: Cysteine-rich peptide clone 2 (63 aa).

The first 23 residues, 1-23 (MHFSGVVLILLSMTLVNFVFVET), serve as a signal peptide directing secretion. Intrachain disulfides connect cysteine 33–cysteine 53, cysteine 38–cysteine 58, and cysteine 42–cysteine 60.

As to expression, expressed by the venom gland.

Its subcellular location is the secreted. The protein is Cysteine-rich peptide clone 2 of Tityus costatus (Brazilian scorpion).